A 555-amino-acid chain; its full sequence is CTP synthase (555 aa).

The amidoligase domain stretch occupies residues 1–267; the sequence is MTKFVFVTGG…AQQVLKFMHL (267 aa). S13 lines the CTP pocket. S13 is a binding site for UTP. ATP is bound by residues 14–19 and D71; that span reads SIGKGI. Mg(2+) is bound by residues D71 and E141. CTP contacts are provided by residues 148–150, 188–193, and K224; these read DIE and KTKPTQ. UTP is bound by residues 188 to 193 and K224; that span reads KTKPTQ. Residue A242 participates in ATP binding. Positions 299–535 constitute a Glutamine amidotransferase type-1 domain; it reads YVQLSDAYLS…VGACLADNGN (237 aa). G354 serves as a coordination point for L-glutamine. C381 serves as the catalytic Nucleophile; for glutamine hydrolysis. L-glutamine is bound by residues 382-385, E405, and R463; that span reads LGMQ. Active-site residues include H508 and E510. Residues 536 to 555 are disordered; it reads NANHHDSTPAEPLVSEPLSS.

This sequence belongs to the CTP synthase family. In terms of assembly, homotetramer.

It catalyses the reaction UTP + L-glutamine + ATP + H2O = CTP + L-glutamate + ADP + phosphate + 2 H(+). It carries out the reaction L-glutamine + H2O = L-glutamate + NH4(+). The enzyme catalyses UTP + NH4(+) + ATP = CTP + ADP + phosphate + 2 H(+). The protein operates within pyrimidine metabolism; CTP biosynthesis via de novo pathway; CTP from UDP: step 2/2. Allosterically activated by GTP, when glutamine is the substrate; GTP has no effect on the reaction when ammonia is the substrate. The allosteric effector GTP functions by stabilizing the protein conformation that binds the tetrahedral intermediate(s) formed during glutamine hydrolysis. Inhibited by the product CTP, via allosteric rather than competitive inhibition. In terms of biological role, catalyzes the ATP-dependent amination of UTP to CTP with either L-glutamine or ammonia as the source of nitrogen. Regulates intracellular CTP levels through interactions with the four ribonucleotide triphosphates. This chain is CTP synthase, found in Acaryochloris marina (strain MBIC 11017).